The primary structure comprises 409 residues: Pyrophosphate--fructose 6-phosphate 1-phosphotransferase (409 aa).

Residue Gly-14 participates in diphosphate binding. Mg(2+) is bound at residue Asp-123. Residues 151-153 (TID), 196-198 (MGR), Glu-268, and 325-328 (YFAR) contribute to the substrate site. The Proton acceptor role is filled by Asp-153.

It belongs to the phosphofructokinase type A (PFKA) family. PPi-dependent PFK group II subfamily. Clade 'P' sub-subfamily. As to quaternary structure, homotetramer. Requires Mg(2+) as cofactor.

The protein resides in the cytoplasm. The catalysed reaction is beta-D-fructose 6-phosphate + diphosphate = beta-D-fructose 1,6-bisphosphate + phosphate + H(+). The protein operates within carbohydrate degradation; glycolysis; D-glyceraldehyde 3-phosphate and glycerone phosphate from D-glucose: step 3/4. Non-allosteric. Catalyzes the phosphorylation of D-fructose 6-phosphate, the first committing step of glycolysis. Uses inorganic phosphate (PPi) as phosphoryl donor instead of ATP like common ATP-dependent phosphofructokinases (ATP-PFKs), which renders the reaction reversible, and can thus function both in glycolysis and gluconeogenesis. Consistently, PPi-PFK can replace the enzymes of both the forward (ATP-PFK) and reverse (fructose-bisphosphatase (FBPase)) reactions. In Methylotuvimicrobium alcaliphilum (strain DSM 19304 / NCIMB 14124 / VKM B-2133 / 20Z) (Methylomicrobium alcaliphilum), this protein is Pyrophosphate--fructose 6-phosphate 1-phosphotransferase.